A 298-amino-acid chain; its full sequence is ADP/ATP translocase 1 (298 aa).

Topologically, residues 1 to 7 (MGDQALS) are mitochondrial intermembrane. Position 2 is an N-acetylglycine (Gly2). One copy of the Solcar 1 repeat lies at 6 to 98 (LSFLKDFLAG…FAFKDKYKQI (93 aa)). Ser7 is modified (phosphoserine). The chain crosses the membrane as a helical span at residues 8–37 (FLKDFLAGGIAAAVSKTAVAPIERVKLLLQ). The Mitochondrial matrix segment spans residues 38 to 74 (VQHASKQISAEKQYKGIIDCVVRIPKEQGFLSFWRGN). An N6,N6,N6-trimethyllysine modification is found at Lys52. The helical transmembrane segment at 75 to 99 (LANVIRYFPTQALNFAFKDKYKQIF) threads the bilayer. ADP is bound by residues Arg80 and Lys92. Topologically, residues 100 to 109 (LGGVDRHKQF) are mitochondrial intermembrane. A helical transmembrane segment spans residues 110–130 (WRYFAGNLASGGAAGATSLCF). 2 Solcar repeats span residues 111-201 (RYFA…AKGM) and 212-297 (VSWM…IKKY). Residues 131-178 (VYPLDFARTRLAADVGKGSSQREFNGLGDCLTKIFKSDGLKGLYQGFS) are Mitochondrial matrix-facing. Lys147 carries the post-translational modification N6-succinyllysine. A phosphoserine mark is found at Ser149 and Ser150. Cys160 carries the S-nitrosocysteine modification. A helical transmembrane segment spans residues 179–199 (VSVQGIIIYRAAYFGVYDTAK). Residues 200-210 (GMLPDPKNVHI) are Mitochondrial intermembrane-facing. A helical membrane pass occupies residues 211–231 (IVSWMIAQSVTAVAGLVSYPF). Topologically, residues 232-273 (DTVRRRMMMQSGRKGADIMYTGTVDCWRKIAKDEGRKAFFKG) are mitochondrial matrix. Arg235 lines the ADP pocket. Residues 235–240 (RRRMMM) are important for transport activity. The Nucleotide carrier signature motif signature appears at 235-240 (RRRMMM). 2 positions are modified to N6-succinyllysine: Lys245 and Lys272. The helical transmembrane segment at 274-291 (AWSNVLRGMGGAFVLVLY) threads the bilayer. Over 292–298 (DEIKKYV) the chain is Mitochondrial intermembrane.

Belongs to the mitochondrial carrier (TC 2.A.29) family. In terms of assembly, monomer. Found in a complex with ARL2, ARL2BP and SLC25A4/ANT1. Interacts with ARL2BP. Interacts with TIMM44; leading to inhibit the presequence translocase TIMM23, thereby promoting stabilization of PINK1. In terms of processing, under cell death induction, transglutaminated by TGM2. Transglutamination leads to formation of covalent cross-links between a glutamine and the epsilon-amino group of a lysine residue, forming polymers.

It localises to the mitochondrion inner membrane. The protein resides in the membrane. The catalysed reaction is ADP(in) + ATP(out) = ADP(out) + ATP(in). The enzyme catalyses H(+)(in) = H(+)(out). With respect to regulation, the matrix-open state (m-state) is inhibited by the membrane-permeable bongkrekic acid (BKA). The cytoplasmic-open state (c-state) is inhibited by the membrane-impermeable toxic inhibitor carboxyatractyloside (CATR). Proton transporter activity is inhibited by ADP:ATP antiporter activity. In terms of biological role, ADP:ATP antiporter that mediates import of ADP into the mitochondrial matrix for ATP synthesis, and export of ATP out to fuel the cell. Cycles between the cytoplasmic-open state (c-state) and the matrix-open state (m-state): operates by the alternating access mechanism with a single substrate-binding site intermittently exposed to either the cytosolic (c-state) or matrix (m-state) side of the inner mitochondrial membrane. In addition to its ADP:ATP antiporter activity, also involved in mitochondrial uncoupling and mitochondrial permeability transition pore (mPTP) activity. Plays a role in mitochondrial uncoupling by acting as a proton transporter: proton transport uncouples the proton flows via the electron transport chain and ATP synthase to reduce the efficiency of ATP production and cause mitochondrial thermogenesis. Proton transporter activity is inhibited by ADP:ATP antiporter activity, suggesting that SLC25A4/ANT1 acts as a master regulator of mitochondrial energy output by maintaining a delicate balance between ATP production (ADP:ATP antiporter activity) and thermogenesis (proton transporter activity). Proton transporter activity requires free fatty acids as cofactor, but does not transport it. Also plays a key role in mPTP opening, a non-specific pore that enables free passage of the mitochondrial membranes to solutes of up to 1.5 kDa, and which contributes to cell death. It is however unclear if SLC25A4/ANT1 constitutes a pore-forming component of mPTP or regulates it. Acts as a regulator of mitophagy independently of ADP:ATP antiporter activity: promotes mitophagy via interaction with TIMM44, leading to inhibit the presequence translocase TIMM23, thereby promoting stabilization of PINK1. This is ADP/ATP translocase 1 from Rattus norvegicus (Rat).